Reading from the N-terminus, the 159-residue chain is Large ribosomal subunit protein uL11 (159 aa).

Belongs to the universal ribosomal protein uL11 family. Part of the ribosomal stalk of the 50S ribosomal subunit. Interacts with L10 and the large rRNA to form the base of the stalk. L10 forms an elongated spine to which L12 dimers bind in a sequential fashion forming a multimeric L10(L12)X complex.

Its function is as follows. Forms part of the ribosomal stalk which helps the ribosome interact with GTP-bound translation factors. This is Large ribosomal subunit protein uL11 from Methanococcus maripaludis (strain C5 / ATCC BAA-1333).